Reading from the N-terminus, the 582-residue chain is Colicin-E9 (582 aa).

Disordered stretches follow at residues 1–74 (MSGG…SGGG), 246–270 (SPGVTNNTDKDVRPAGFTQGGNTRD), 294–321 (PDQVKQRQDEENRRQQEWDATHPVEAAE), 422–489 (ADAA…IADK), and 510–542 (SKDPELSKNLNPSNKSSVSKGYSPFTPKNQQVG). The segment covering 20-35 (INGGPTGIGVSGGASD) has biased composition (gly residues). A compositionally biased stretch (low complexity) spans 36–45 (GSGWSSENNP). Over residues 46–74 (WGGGSGSGIHWGGGSGRGNGGGNGNSGGG) the composition is skewed to gly residues. 3 stretches are compositionally biased toward basic and acidic residues: residues 297–321 (VKQRQDEENRRQQEWDATHPVEAAE), 430–453 (QERRKQKENKEKDAKDKLDKESKR), and 465–476 (PVGDKWLDDAGK). The segment covering 516 to 529 (SKNLNPSNKSSVSK) has biased composition (low complexity). The Zn(2+) site is built by His-550, His-575, and His-579.

It belongs to the colicin/pyosin nuclease family.

Its function is as follows. This plasmid-coded bactericidal protein is an endonuclease active on both single- and double-stranded DNA but with undefined specificity. Colicins are polypeptide toxins produced by and active against E.coli and closely related bacteria. The sequence is that of Colicin-E9 (col) from Escherichia coli.